Consider the following 356-residue polypeptide: Protein-glutamate methylesterase/protein-glutamine glutaminase 3 (356 aa).

Residues 3–120 (KVAIVDDSAV…KGFLEESQAR (118 aa)) form the Response regulatory domain. A 4-aspartylphosphate modification is found at aspartate 54. The CheB-type methylesterase domain occupies 165–356 (NQTTDRVVAL…AEEIIAFTKQ (192 aa)). Active-site residues include serine 177, histidine 203, and aspartate 299.

It belongs to the CheB family. Post-translationally, phosphorylated by CheA. Phosphorylation of the N-terminal regulatory domain activates the methylesterase activity.

It is found in the cytoplasm. It carries out the reaction [protein]-L-glutamate 5-O-methyl ester + H2O = L-glutamyl-[protein] + methanol + H(+). The catalysed reaction is L-glutaminyl-[protein] + H2O = L-glutamyl-[protein] + NH4(+). In terms of biological role, involved in chemotaxis. Part of a chemotaxis signal transduction system that modulates chemotaxis in response to various stimuli. Catalyzes the demethylation of specific methylglutamate residues introduced into the chemoreceptors (methyl-accepting chemotaxis proteins or MCP) by CheR. Also mediates the irreversible deamidation of specific glutamine residues to glutamic acid. This Shewanella oneidensis (strain ATCC 700550 / JCM 31522 / CIP 106686 / LMG 19005 / NCIMB 14063 / MR-1) protein is Protein-glutamate methylesterase/protein-glutamine glutaminase 3.